The primary structure comprises 139 residues: Ribulose bisphosphate carboxylase small subunit (139 aa).

Belongs to the RuBisCO small chain family. Heterohexadecamer of 8 large and 8 small subunits.

Its subcellular location is the plastid. The protein resides in the chloroplast. RuBisCO catalyzes two reactions: the carboxylation of D-ribulose 1,5-bisphosphate, the primary event in carbon dioxide fixation, as well as the oxidative fragmentation of the pentose substrate in the photorespiration process. Both reactions occur simultaneously and in competition at the same active site. Although the small subunit is not catalytic it is essential for maximal activity. This Detonula confervacea (Marine diatom) protein is Ribulose bisphosphate carboxylase small subunit.